A 211-amino-acid chain; its full sequence is Uracil phosphoribosyltransferase (211 aa).

30–34 (KGLVR) contributes to the GTP binding site. 5-phospho-alpha-D-ribose 1-diphosphate is bound by residues R79, R104, and 133-141 (DPMLATGTT). Uracil-binding positions include I197 and 202 to 204 (GDA). 5-phospho-alpha-D-ribose 1-diphosphate is bound at residue D203.

It belongs to the UPRTase family. It depends on Mg(2+) as a cofactor.

It catalyses the reaction UMP + diphosphate = 5-phospho-alpha-D-ribose 1-diphosphate + uracil. Its pathway is pyrimidine metabolism; UMP biosynthesis via salvage pathway; UMP from uracil: step 1/1. With respect to regulation, allosterically activated by GTP. In terms of biological role, catalyzes the conversion of uracil and 5-phospho-alpha-D-ribose 1-diphosphate (PRPP) to UMP and diphosphate. The polypeptide is Uracil phosphoribosyltransferase (Pyrobaculum arsenaticum (strain DSM 13514 / JCM 11321 / PZ6)).